We begin with the raw amino-acid sequence, 296 residues long: 6-hydroxypseudooxynicotine dehydrogenase complex subunit alpha (296 aa).

Residues 1–177 (MKPPSFDYVV…VEVNVPQLPH (177 aa)) enclose the FAD-binding PCMH-type domain. Residues 30 to 37 (IIAGGQSL), 111 to 115 (TIGGS), and Glu-124 contribute to the FAD site.

Heterohexamer of 2 alpha (kdhA), 2 beta (kdhB) and 2 gamma (kdhC) subunit. Dimer of heterotrimers. FAD serves as cofactor.

The catalysed reaction is 6-hydroxypseudooxynicotine + A + H2O = 2,6-dihydroxypseudooxynicotine + AH2. It functions in the pathway alkaloid degradation; nicotine degradation. Functionally, molybdo-flavoprotein enzyme complex involved in nicotine degradation. The subunit gamma (large subunit) contains the substrate-binding sites, the subunit alpha (medium subunit) binds FAD and the subunit beta (small subunit) has a 2Fe-2S ferredoxin-type domain which binds 2 2Fe-2S clusters. The sequence is that of 6-hydroxypseudooxynicotine dehydrogenase complex subunit alpha (kdhA) from Paenarthrobacter nicotinovorans (Arthrobacter nicotinovorans).